Here is a 138-residue protein sequence, read N- to C-terminus: uncharacterized protein (138 aa).

Residues methionine 1–aspartate 73 form a disordered region. A compositionally biased stretch (gly residues) spans leucine 7–glycine 18. Residues glycine 19–alanine 29 show a composition bias toward basic and acidic residues. A compositionally biased stretch (low complexity) spans glutamate 30–serine 43. Residues valine 106–valine 126 traverse the membrane as a helical segment.

It belongs to the FAM241 family.

Its subcellular location is the membrane. This is an uncharacterized protein from Bos taurus (Bovine).